Consider the following 143-residue polypeptide: UPF0292 protein Mbar_A0484 (143 aa).

A Toprim domain is found at 28–109 (GAIIIVEGKR…KPELEIRNKL (82 aa)). Glu-34, Asp-78, and Asp-80 together coordinate Mg(2+).

It belongs to the UPF0292 family. Mg(2+) is required as a cofactor.

This is UPF0292 protein Mbar_A0484 from Methanosarcina barkeri (strain Fusaro / DSM 804).